We begin with the raw amino-acid sequence, 166 residues long: Urease accessory protein UreE 2 (166 aa).

The segment at 135–154 (EHGAYGGGHHHSRAGEEDFN) is disordered.

It belongs to the UreE family.

It is found in the cytoplasm. Functionally, involved in urease metallocenter assembly. Binds nickel. Probably functions as a nickel donor during metallocenter assembly. In Pseudomonas syringae pv. syringae (strain B728a), this protein is Urease accessory protein UreE 2.